The following is a 478-amino-acid chain: V-type ATP synthase beta chain (478 aa).

This sequence belongs to the ATPase alpha/beta chains family.

Its function is as follows. Produces ATP from ADP in the presence of a proton gradient across the membrane. The V-type beta chain is a regulatory subunit. This is V-type ATP synthase beta chain from Thermus thermophilus (strain ATCC BAA-163 / DSM 7039 / HB27).